Reading from the N-terminus, the 495-residue chain is Probable aspartic-type endopeptidase OPSB (495 aa).

The signal sequence occupies residues methionine 1–threonine 19. The region spanning tyrosine 73–alanine 408 is the Peptidase A1 domain. Asparagine 76 is a glycosylation site (N-linked (GlcNAc...) asparagine). Residue aspartate 91 is part of the active site. N-linked (GlcNAc...) asparagine glycosylation is present at asparagine 136. The active site involves aspartate 290. Asparagine 413 is a glycosylation site (N-linked (GlcNAc...) asparagine). Positions alanine 447–glutamine 470 are disordered. Alanine 467 is lipidated: GPI-anchor amidated alanine. Positions alanine 468–methionine 495 are cleaved as a propeptide — removed in mature form.

Belongs to the peptidase A1 family.

It localises to the cell membrane. In terms of biological role, probable GPI-anchored aspartic-type endopeptidase which contributes to virulence. The polypeptide is Probable aspartic-type endopeptidase OPSB (OPSB) (Arthroderma benhamiae (strain ATCC MYA-4681 / CBS 112371) (Trichophyton mentagrophytes)).